A 100-amino-acid polypeptide reads, in one-letter code: Large ribosomal subunit protein uL23c (100 aa).

The protein belongs to the universal ribosomal protein uL23 family. As to quaternary structure, part of the 50S ribosomal subunit.

Its subcellular location is the plastid. The protein localises to the chloroplast. Functionally, binds to 23S rRNA. The protein is Large ribosomal subunit protein uL23c (rpl23) of Euglena gracilis.